A 72-amino-acid chain; its full sequence is VKRPMNAFMVWSQIERRKIMEQSPDMHNAEISKRLGKRWKLLKGSDKIPFIREAERLRLKHMADYPDYKYRP.

A DNA-binding region (HMG box) is located at residues 1–69; that stretch reads VKRPMNAFMV…KHMADYPDYK (69 aa).

It is found in the nucleus. The sequence is that of SRY-related protein AES1 from Alligator mississippiensis (American alligator).